Consider the following 298-residue polypeptide: Tyrosine recombinase XerC (298 aa).

The Core-binding (CB) domain maps to 1–84 (MNHIQEAFLN…TLRTFYEYWM (84 aa)). A Tyr recombinase domain is found at 105 to 286 (YLPQFFYEEE…SNQQLRKVYL (182 aa)). Residues Arg-145, Lys-169, His-238, Arg-241, and His-264 contribute to the active site. Residue Tyr-273 is the O-(3'-phospho-DNA)-tyrosine intermediate of the active site.

This sequence belongs to the 'phage' integrase family. XerC subfamily. Forms a cyclic heterotetrameric complex composed of two molecules of XerC and two molecules of XerD.

It localises to the cytoplasm. Its function is as follows. Site-specific tyrosine recombinase, which acts by catalyzing the cutting and rejoining of the recombining DNA molecules. The XerC-XerD complex is essential to convert dimers of the bacterial chromosome into monomers to permit their segregation at cell division. It also contributes to the segregational stability of plasmids. This chain is Tyrosine recombinase XerC, found in Staphylococcus aureus (strain MSSA476).